Reading from the N-terminus, the 647-residue chain is Chaperone protein DnaK (647 aa).

T199 is subject to Phosphothreonine; by autocatalysis. Positions 602 to 647 are disordered; the sequence is MYAQEQAQAGQQAGPGAGSASAGQSGEKPVEGEVVDAEFEEVKDKK. Residues 604-627 are compositionally biased toward low complexity; the sequence is AQEQAQAGQQAGPGAGSASAGQSG.

It belongs to the heat shock protein 70 family.

In terms of biological role, acts as a chaperone. The chain is Chaperone protein DnaK from Nitrosomonas eutropha (strain DSM 101675 / C91 / Nm57).